A 355-amino-acid polypeptide reads, in one-letter code: Tryptophan--tRNA ligase (355 aa).

ATP contacts are provided by residues 13–15 (QPT) and 21–22 (GN). The 'HIGH' region signature appears at 14 to 22 (PTGNLHLGN). Asp137 serves as a coordination point for L-tryptophan. ATP contacts are provided by residues 149–151 (GED), Ile208, and 217–221 (KMSKS). The short motif at 217-221 (KMSKS) is the 'KMSKS' region element.

The protein belongs to the class-I aminoacyl-tRNA synthetase family. Homodimer.

It localises to the cytoplasm. It carries out the reaction tRNA(Trp) + L-tryptophan + ATP = L-tryptophyl-tRNA(Trp) + AMP + diphosphate + H(+). Its function is as follows. Catalyzes the attachment of tryptophan to tRNA(Trp). This chain is Tryptophan--tRNA ligase, found in Mesorhizobium japonicum (strain LMG 29417 / CECT 9101 / MAFF 303099) (Mesorhizobium loti (strain MAFF 303099)).